The following is a 178-amino-acid chain: 6,7-dimethyl-8-ribityllumazine synthase (178 aa).

5-amino-6-(D-ribitylamino)uracil is bound by residues Tyr27, 58 to 60 (SLE), and 82 to 84 (CVI). 87–88 (AT) provides a ligand contact to (2S)-2-hydroxy-3-oxobutyl phosphate. The active-site Proton donor is the His90. Asn114 is a 5-amino-6-(D-ribitylamino)uracil binding site. Arg128 lines the (2S)-2-hydroxy-3-oxobutyl phosphate pocket.

Belongs to the DMRL synthase family.

The enzyme catalyses (2S)-2-hydroxy-3-oxobutyl phosphate + 5-amino-6-(D-ribitylamino)uracil = 6,7-dimethyl-8-(1-D-ribityl)lumazine + phosphate + 2 H2O + H(+). The protein operates within cofactor biosynthesis; riboflavin biosynthesis; riboflavin from 2-hydroxy-3-oxobutyl phosphate and 5-amino-6-(D-ribitylamino)uracil: step 1/2. Catalyzes the formation of 6,7-dimethyl-8-ribityllumazine by condensation of 5-amino-6-(D-ribitylamino)uracil with 3,4-dihydroxy-2-butanone 4-phosphate. This is the penultimate step in the biosynthesis of riboflavin. This Jannaschia sp. (strain CCS1) protein is 6,7-dimethyl-8-ribityllumazine synthase.